Consider the following 523-residue polypeptide: Bifunctional purine biosynthesis protein PurH (523 aa).

Residues 4–152 (DHIRRPIRRA…KNHPSVAVVT (149 aa)) form the MGS-like domain.

It belongs to the PurH family.

The catalysed reaction is (6R)-10-formyltetrahydrofolate + 5-amino-1-(5-phospho-beta-D-ribosyl)imidazole-4-carboxamide = 5-formamido-1-(5-phospho-D-ribosyl)imidazole-4-carboxamide + (6S)-5,6,7,8-tetrahydrofolate. It carries out the reaction IMP + H2O = 5-formamido-1-(5-phospho-D-ribosyl)imidazole-4-carboxamide. It participates in purine metabolism; IMP biosynthesis via de novo pathway; 5-formamido-1-(5-phospho-D-ribosyl)imidazole-4-carboxamide from 5-amino-1-(5-phospho-D-ribosyl)imidazole-4-carboxamide (10-formyl THF route): step 1/1. Its pathway is purine metabolism; IMP biosynthesis via de novo pathway; IMP from 5-formamido-1-(5-phospho-D-ribosyl)imidazole-4-carboxamide: step 1/1. The polypeptide is Bifunctional purine biosynthesis protein PurH (Mycobacterium marinum (strain ATCC BAA-535 / M)).